The sequence spans 642 residues: Sec1 family domain-containing protein 1 (642 aa).

Ala2 carries the N-acetylalanine modification. Phosphoserine occurs at positions 37, 303, and 528.

This sequence belongs to the STXBP/unc-18/SEC1 family. Interacts with STX17. Interacts with STX5A. Interacts with the COG complex via COG4.

The protein localises to the cytoplasm. It is found in the endoplasmic reticulum membrane. Its subcellular location is the golgi apparatus. It localises to the golgi stack membrane. Functionally, plays a role in SNARE-pin assembly and Golgi-to-ER retrograde transport via its interaction with COG4. Involved in vesicular transport between the endoplasmic reticulum and the Golgi. In Homo sapiens (Human), this protein is Sec1 family domain-containing protein 1 (SCFD1).